A 242-amino-acid chain; its full sequence is Probable transcriptional regulatory protein Bcen2424_2294 (242 aa).

Belongs to the TACO1 family.

It localises to the cytoplasm. This chain is Probable transcriptional regulatory protein Bcen2424_2294, found in Burkholderia cenocepacia (strain HI2424).